The chain runs to 354 residues: Nicotinate-nucleotide--dimethylbenzimidazole phosphoribosyltransferase (354 aa).

The active-site Proton acceptor is glutamate 313.

The protein belongs to the CobT family.

It catalyses the reaction 5,6-dimethylbenzimidazole + nicotinate beta-D-ribonucleotide = alpha-ribazole 5'-phosphate + nicotinate + H(+). The protein operates within nucleoside biosynthesis; alpha-ribazole biosynthesis; alpha-ribazole from 5,6-dimethylbenzimidazole: step 1/2. In terms of biological role, catalyzes the synthesis of alpha-ribazole-5'-phosphate from nicotinate mononucleotide (NAMN) and 5,6-dimethylbenzimidazole (DMB). This chain is Nicotinate-nucleotide--dimethylbenzimidazole phosphoribosyltransferase, found in Ralstonia nicotianae (strain ATCC BAA-1114 / GMI1000) (Ralstonia solanacearum).